The following is a 291-amino-acid chain: 33 kDa chaperonin (291 aa).

2 disulfides stabilise this stretch: cysteine 237–cysteine 239 and cysteine 270–cysteine 273.

Belongs to the HSP33 family. Under oxidizing conditions two disulfide bonds are formed involving the reactive cysteines. Under reducing conditions zinc is bound to the reactive cysteines and the protein is inactive.

Its subcellular location is the cytoplasm. Functionally, redox regulated molecular chaperone. Protects both thermally unfolding and oxidatively damaged proteins from irreversible aggregation. Plays an important role in the bacterial defense system toward oxidative stress. The sequence is that of 33 kDa chaperonin from Bacillus cytotoxicus (strain DSM 22905 / CIP 110041 / 391-98 / NVH 391-98).